Consider the following 541-residue polypeptide: Ankyrin repeat domain-containing protein 13C (541 aa).

Over residues 1–20 the composition is skewed to basic and acidic residues; the sequence is MTGEKIRSLRRDHKPSKEEG. The tract at residues 1-27 is disordered; that stretch reads MTGEKIRSLRRDHKPSKEEGDLLEPGD. 3 ANK repeats span residues 111 to 142, 143 to 172, and 176 to 205; these read PAHYPVHECVFKGDVRRLSSLIRTHNIGQKDN, HGNTPLHLAVMLGNKECAHLLLAHNAPVKV, and QGWSPLAEAISYGDRQMITALLRKLKQQSR. S411 bears the Phosphoserine mark.

It localises to the endoplasmic reticulum membrane. Acts as a molecular chaperone for G protein-coupled receptors, regulating their biogenesis and exit from the ER. In Homo sapiens (Human), this protein is Ankyrin repeat domain-containing protein 13C (ANKRD13C).